A 135-amino-acid polypeptide reads, in one-letter code: MAEKEEGKVAAEGGAEAEADEEVEVKFRLFDGSDIGPLRCNAVATTVAALKDRVVADWPKDKTIVPKTANDVKLISGGKILENDKNIAQCRAPFGDLPSTAITMHVVVQPSSAKSKPDKKTNKLPKTTRCSCTIL.

Positions 1 to 20 (MAEKEEGKVAAEGGAEAEAD) are disordered. The Ubiquitin-like domain maps to 23–92 (VEVKFRLFDG…NDKNIAQCRA (70 aa)). The residue at position 132 (Cys-132) is a Cysteine methyl ester. Cys-132 carries the S-geranylgeranyl cysteine lipid modification. A propeptide spans 133-135 (TIL) (removed in mature form).

The protein localises to the cell membrane. Its function is as follows. May serve as docking site to facilitate the association of other proteins to the plasma membrane. This chain is Membrane-anchored ubiquitin-fold protein 4 (MUB4), found in Oryza sativa subsp. japonica (Rice).